A 364-amino-acid chain; its full sequence is tRNA 2-selenouridine synthase (364 aa).

In terms of domain architecture, Rhodanese spans 14–137 (LIADTPIIDV…LRQTAIQATI (124 aa)). C97 functions as the S-selanylcysteine intermediate in the catalytic mechanism.

Belongs to the SelU family. Monomer.

It catalyses the reaction 5-methylaminomethyl-2-thiouridine(34) in tRNA + selenophosphate + (2E)-geranyl diphosphate + H2O + H(+) = 5-methylaminomethyl-2-selenouridine(34) in tRNA + (2E)-thiogeraniol + phosphate + diphosphate. The catalysed reaction is 5-methylaminomethyl-2-thiouridine(34) in tRNA + (2E)-geranyl diphosphate = 5-methylaminomethyl-S-(2E)-geranyl-thiouridine(34) in tRNA + diphosphate. It carries out the reaction 5-methylaminomethyl-S-(2E)-geranyl-thiouridine(34) in tRNA + selenophosphate + H(+) = 5-methylaminomethyl-2-(Se-phospho)selenouridine(34) in tRNA + (2E)-thiogeraniol. The enzyme catalyses 5-methylaminomethyl-2-(Se-phospho)selenouridine(34) in tRNA + H2O = 5-methylaminomethyl-2-selenouridine(34) in tRNA + phosphate. Involved in the post-transcriptional modification of the uridine at the wobble position (U34) of tRNA(Lys), tRNA(Glu) and tRNA(Gln). Catalyzes the conversion of 2-thiouridine (S2U-RNA) to 2-selenouridine (Se2U-RNA). Acts in a two-step process involving geranylation of 2-thiouridine (S2U) to S-geranyl-2-thiouridine (geS2U) and subsequent selenation of the latter derivative to 2-selenouridine (Se2U) in the tRNA chain. In Shigella dysenteriae serotype 1 (strain Sd197), this protein is tRNA 2-selenouridine synthase.